Reading from the N-terminus, the 143-residue chain is Ribonuclease HI (143 aa).

The 136-residue stretch at 1-136 (MQEIEIFCDG…CNSLAKLEAQ (136 aa)) folds into the RNase H type-1 domain. The Mg(2+) site is built by Asp-9, Glu-47, Asp-69, and Asn-128.

Belongs to the RNase H family. As to quaternary structure, monomer. Requires Mg(2+) as cofactor.

It is found in the cytoplasm. The catalysed reaction is Endonucleolytic cleavage to 5'-phosphomonoester.. Endonuclease that specifically degrades the RNA of RNA-DNA hybrids. This is Ribonuclease HI (rnhA) from Helicobacter pylori (strain J99 / ATCC 700824) (Campylobacter pylori J99).